The primary structure comprises 317 residues: MIMRFGYVSHAMALWDCSPAKTITFTSFQKLSKQEREDKLYDVTKQNLEHTIRILHYNIAHEIPLYRLSSSIVPLATHPEVEFDYIGAFTPLWRKIGALIKEHNLRISFHPNQFTLFTSDKPHITTNAITDMTYHYKVLDAIGIADSSYINIHVGGAYGNKEKAIERFHENIKKLPAHIKKQMTLENDDKTCTTAETLSICQKEKIPFVFDYHHHMANLCEEPLEELLPAIFETWSHTNIVPKVHISSPKSKKEFRAHAEYIDLEFIKPFLHVAKKINHNFDIMIESKQKDLAMLQFIQELSSIRGIKRISSSTLQW.

Belongs to the uve1/UvsE family.

Component in a DNA repair pathway. Removal of UV LIGHT damaged nucleotides. Recognizes pyrimidine dimers and cleave a phosphodiester bond immediately 5' to the lesion. The protein is UV DNA damage endonuclease of Bacillus anthracis (strain A0248).